A 403-amino-acid chain; its full sequence is Coiled-coil domain-containing glutamate-rich protein 1 (403 aa).

Over residues 1–11 (MTQTVNEREDP) the composition is skewed to basic and acidic residues. Disordered stretches follow at residues 1 to 23 (MTQTVNEREDPLNLGGGGWASSI), 51 to 70 (IEYEASRKQPKQQRSPGSWF), 134 to 164 (RPPGRKKRWGRRGRGLRRHPRRSFPRNPPID), 202 to 241 (QQEKLERQQAALRAQQAQEGGISPGDSTTNDAPHSGVEED), and 261 to 350 (PALM…GEQR). Over residues 137–157 (GRKKRWGRRGRGLRRHPRRSF) the composition is skewed to basic residues. Residues 209 to 220 (QQAALRAQQAQE) are compositionally biased toward low complexity. Residues 261 to 271 (PALMQHNQSPT) show a composition bias toward polar residues. The segment covering 275 to 346 (VEEEEKNVDD…YMLEETGLEE (72 aa)) has biased composition (acidic residues). Positions 292–353 (CDEKEESEEE…LEEGEQRAEE (62 aa)) form a coiled coil.

Expressed in testis.

The protein resides in the nucleus. In terms of biological role, regulator of histone epigenetic modifications and chromatin compaction into the sperm head, required for histone-to-protamine (HTP) transition. HTP is a key event in which somatic histones are first replaced by testis-specific histone variants, then transition proteins (TNPs) are incorporated into the spermatid nucleus, and finally protamines (PRMs) replace the TNPs to promote chromatin condensation. The sequence is that of Coiled-coil domain-containing glutamate-rich protein 1 (Ccer1) from Mus musculus (Mouse).